A 179-amino-acid polypeptide reads, in one-letter code: Small ribosomal subunit protein eS10x (179 aa).

Residues 90 to 179 form a disordered region; it reads TLKKSAKPGG…AAAPSGSGLP (90 aa). Residues 108-129 show a composition bias toward basic and acidic residues; it reads DRSRGPRHEGGDRPRFGDRDGY. Gly residues predominate over residues 134–144; the sequence is RAGGEFGGEKG. Positions 145–156 are enriched in low complexity; sequence GAPADYQPSFQG. Positions 157-167 are enriched in gly residues; the sequence is SGRGFGRGAGG. Over residues 168–179 the composition is skewed to low complexity; that stretch reads YSAAAPSGSGLP.

Belongs to the eukaryotic ribosomal protein eS10 family.

The protein localises to the cytoplasm. In Arabidopsis thaliana (Mouse-ear cress), this protein is Small ribosomal subunit protein eS10x (RPS10C).